The following is a 194-amino-acid chain: Xanthine phosphoribosyltransferase (194 aa).

Xanthine-binding residues include Leu-20 and Asn-27. Residue 128-132 (ANGEA) coordinates 5-phospho-alpha-D-ribose 1-diphosphate. A xanthine-binding site is contributed by Lys-156.

The protein belongs to the purine/pyrimidine phosphoribosyltransferase family. Xpt subfamily. In terms of assembly, homodimer.

It localises to the cytoplasm. The enzyme catalyses XMP + diphosphate = xanthine + 5-phospho-alpha-D-ribose 1-diphosphate. It functions in the pathway purine metabolism; XMP biosynthesis via salvage pathway; XMP from xanthine: step 1/1. Functionally, converts the preformed base xanthine, a product of nucleic acid breakdown, to xanthosine 5'-monophosphate (XMP), so it can be reused for RNA or DNA synthesis. The protein is Xanthine phosphoribosyltransferase of Macrococcus caseolyticus (strain JCSC5402) (Macrococcoides caseolyticum).